The following is a 414-amino-acid chain: Arrestin domain-containing protein 3 (414 aa).

Short sequence motifs (PPxY motif) lie at residues 346–349 (PPSY) and 391–394 (PPLY). The segment at 393 to 414 (LYSEIDPNPDQSSEDRPSCPSR) is disordered. Residues 405 to 414 (SEDRPSCPSR) are compositionally biased toward basic and acidic residues.

It belongs to the arrestin family. In terms of assembly, interacts (via PPxY motifs) with NEDD4 (via WW domains). Interacts with ADRB2. Interacts with ADRB3. Interacts with HGS (via PPxY motifs). Does not bind TXN (thioredoxin). Interacts with ITCH. As to expression, detected in visceral fat, subcutaneous fat, brown fat and skeletal muscle, and at lower levels in kidney.

Its subcellular location is the cytoplasm. It localises to the cell membrane. It is found in the lysosome. The protein resides in the endosome. The protein localises to the early endosome. In terms of biological role, adapter protein that plays a role in regulating cell-surface expression of adrenergic receptors and probably also other G protein-coupled receptors. Plays a role in NEDD4-mediated ubiquitination and endocytosis af activated ADRB2 and subsequent ADRB2 degradation. May recruit NEDD4 to ADRB2. Alternatively, may function as adapter protein that does not play a major role in recruiting NEDD4 to ADRB2, but rather plays a role in a targeting ADRB2 to endosomes. The protein is Arrestin domain-containing protein 3 (Arrdc3) of Mus musculus (Mouse).